Reading from the N-terminus, the 400-residue chain is Probable protein phosphatase 2C 64 (400 aa).

In terms of domain architecture, PPM-type phosphatase spans 47 to 355 (DFSMAVVQAN…DDITVIVVFF (309 aa)). Residue Ser-75 is modified to Phosphoserine. Mn(2+) contacts are provided by Asp-86, Gly-87, Asp-287, and Asp-346.

The protein belongs to the PP2C family. In terms of assembly, interacts with SAUR19. Mg(2+) is required as a cofactor. Requires Mn(2+) as cofactor.

It carries out the reaction O-phospho-L-seryl-[protein] + H2O = L-seryl-[protein] + phosphate. It catalyses the reaction O-phospho-L-threonyl-[protein] + H2O = L-threonyl-[protein] + phosphate. Its function is as follows. Dephosphorylates and represses plasma membrane H(+)-ATPases (PM H(+)-ATPases, e.g. AHA1 and AHA2), thus influencing negatively plant growth and fitness. This Arabidopsis thaliana (Mouse-ear cress) protein is Probable protein phosphatase 2C 64.